The chain runs to 702 residues: Elongation factor G (702 aa).

One can recognise a tr-type G domain in the interval 8-290 (CQYRNIGISA…AIIEYLPAPN (283 aa)). GTP-binding positions include 17 to 24 (AHIDAGKT), 88 to 92 (DTPGH), and 142 to 145 (NKMD).

The protein belongs to the TRAFAC class translation factor GTPase superfamily. Classic translation factor GTPase family. EF-G/EF-2 subfamily.

The protein resides in the cytoplasm. Its function is as follows. Catalyzes the GTP-dependent ribosomal translocation step during translation elongation. During this step, the ribosome changes from the pre-translocational (PRE) to the post-translocational (POST) state as the newly formed A-site-bound peptidyl-tRNA and P-site-bound deacylated tRNA move to the P and E sites, respectively. Catalyzes the coordinated movement of the two tRNA molecules, the mRNA and conformational changes in the ribosome. The sequence is that of Elongation factor G from Buchnera aphidicola subsp. Schizaphis graminum (strain Sg).